The following is a 508-amino-acid chain: tRNA-2-methylthio-N(6)-dimethylallyladenosine synthase (508 aa).

The 119-residue stretch at 13–131 (KTYEVRTYGC…LPVLLERARV (119 aa)) folds into the MTTase N-terminal domain. Residues cysteine 22, cysteine 60, cysteine 94, cysteine 168, cysteine 172, and cysteine 175 each coordinate [4Fe-4S] cluster. A Radical SAM core domain is found at 154–385 (RESAYAAWVS…ALQEEISWDE (232 aa)). The TRAM domain maps to 387-455 (KKQVGRTLEL…PHHLLAEGPV (69 aa)).

It belongs to the methylthiotransferase family. MiaB subfamily. Monomer. [4Fe-4S] cluster is required as a cofactor.

It is found in the cytoplasm. It catalyses the reaction N(6)-dimethylallyladenosine(37) in tRNA + (sulfur carrier)-SH + AH2 + 2 S-adenosyl-L-methionine = 2-methylsulfanyl-N(6)-dimethylallyladenosine(37) in tRNA + (sulfur carrier)-H + 5'-deoxyadenosine + L-methionine + A + S-adenosyl-L-homocysteine + 2 H(+). In terms of biological role, catalyzes the methylthiolation of N6-(dimethylallyl)adenosine (i(6)A), leading to the formation of 2-methylthio-N6-(dimethylallyl)adenosine (ms(2)i(6)A) at position 37 in tRNAs that read codons beginning with uridine. This chain is tRNA-2-methylthio-N(6)-dimethylallyladenosine synthase, found in Streptomyces avermitilis (strain ATCC 31267 / DSM 46492 / JCM 5070 / NBRC 14893 / NCIMB 12804 / NRRL 8165 / MA-4680).